A 504-amino-acid polypeptide reads, in one-letter code: Maturase K (504 aa).

The protein belongs to the intron maturase 2 family. MatK subfamily.

Its subcellular location is the plastid. The protein localises to the chloroplast. Its function is as follows. Usually encoded in the trnK tRNA gene intron. Probably assists in splicing its own and other chloroplast group II introns. The protein is Maturase K of Bombax buonopozense (Red-flowered silk cotton tree).